The following is an 83-amino-acid chain: Small ribosomal subunit protein bS20 (83 aa).

Belongs to the bacterial ribosomal protein bS20 family.

In terms of biological role, binds directly to 16S ribosomal RNA. The chain is Small ribosomal subunit protein bS20 from Lactobacillus delbrueckii subsp. bulgaricus (strain ATCC 11842 / DSM 20081 / BCRC 10696 / JCM 1002 / NBRC 13953 / NCIMB 11778 / NCTC 12712 / WDCM 00102 / Lb 14).